Reading from the N-terminus, the 250-residue chain is UPF0758 protein RPB_0700 (250 aa).

The tract at residues 1–27 (MVDPISNAAPPMPADSSERLDPPGFAE) is disordered. In terms of domain architecture, MPN spans 128-250 (VLSSWSAVID…HASLKGLKLF (123 aa)). Residues His-199, His-201, and Asp-212 each coordinate Zn(2+). A JAMM motif motif is present at residues 199–212 (HNHPSGDPTPSQAD).

The protein belongs to the UPF0758 family.

In Rhodopseudomonas palustris (strain HaA2), this protein is UPF0758 protein RPB_0700.